A 208-amino-acid polypeptide reads, in one-letter code: Type 4 adapter protein LvgA (208 aa).

The T4BSS is a complex nanomachine composed of several subcomplexes. This subunit is part of the Type IV Coupling Complex (T4CC), a subcomplex composed of the DotLMNYZ core and the IcmSW-LvgA adapter subunits, linked by the C-terminal tail of DotL. Interacts with DotL, IcmS and IcmW. Interacts with various effector proteins, including VpdB, SetA, PieA and SidH.

Its subcellular location is the cytoplasm. In terms of biological role, component of the Dot/Icm type IVB secretion system (T4BSS), which is used to inject bacterial effector proteins into eukaryotic host cells. Part of a subcomplex which recruits effector proteins and delivers them to the core transmembrane subcomplex. Is a critical subunit for binding a subset of effector proteins. Recognizes more than one type of binding motif. May be a critical factor that confers host specificity. The polypeptide is Type 4 adapter protein LvgA (Legionella pneumophila subsp. pneumophila (strain Philadelphia 1 / ATCC 33152 / DSM 7513)).